A 307-amino-acid chain; its full sequence is MTRHFLRDDDLSPAEQAEVLDLAVQLKRERWSERPLAGPQTVAVIFDKSSTRTRVSFAVGIADLGGVPLVISTANSQLGGKETASDTARVLERQVAAIVWRTYAQSGLEEMAAGTTVPVVNALSDDFHPCQILADLLTIREHRGDLAGQTLVFLGDGASNMAHSYLLGGVTAGMHVRIAAPAGYVPAAVVVADAERIAATTGGSVRILADPVEAVTGADVVITDTWVSMGREEEKAQRLAELGAYQVTTELMAHAVDDAIFLHCLPADREYEVAAEVIDGPQSVVWDEAENRLHAQKALLVWLLRQS.

Residues 50 to 53 (STRT), Q77, R101, and 128 to 131 (HPCQ) each bind carbamoyl phosphate. L-ornithine-binding positions include N160, D224, and 228-229 (SM). Residues 264–265 (CL) and R292 each bind carbamoyl phosphate.

The protein belongs to the aspartate/ornithine carbamoyltransferase superfamily. OTCase family.

It is found in the cytoplasm. It carries out the reaction carbamoyl phosphate + L-ornithine = L-citrulline + phosphate + H(+). It participates in amino-acid biosynthesis; L-arginine biosynthesis; L-arginine from L-ornithine and carbamoyl phosphate: step 1/3. Reversibly catalyzes the transfer of the carbamoyl group from carbamoyl phosphate (CP) to the N(epsilon) atom of ornithine (ORN) to produce L-citrulline. The chain is Ornithine carbamoyltransferase from Clavibacter sepedonicus (Clavibacter michiganensis subsp. sepedonicus).